The primary structure comprises 338 residues: Rho GTPase-activating protein gacA (338 aa).

The Rho-GAP domain maps to 149–327 (NTLEHVEDEG…NVLSHKVAVH (179 aa)).

The protein resides in the cytoplasm. In terms of biological role, rho GTPase-activating protein involved in the signal transduction pathway. In Dictyostelium discoideum (Social amoeba), this protein is Rho GTPase-activating protein gacA (gacA).